The sequence spans 119 residues: Large ribosomal subunit protein bL19 (119 aa).

Belongs to the bacterial ribosomal protein bL19 family.

Its function is as follows. This protein is located at the 30S-50S ribosomal subunit interface and may play a role in the structure and function of the aminoacyl-tRNA binding site. This chain is Large ribosomal subunit protein bL19, found in Psychromonas ingrahamii (strain DSM 17664 / CCUG 51855 / 37).